A 176-amino-acid chain; its full sequence is Peptide methionine sulfoxide reductase MsrA (176 aa).

C12 is an active-site residue.

It belongs to the MsrA Met sulfoxide reductase family.

The catalysed reaction is L-methionyl-[protein] + [thioredoxin]-disulfide + H2O = L-methionyl-(S)-S-oxide-[protein] + [thioredoxin]-dithiol. It carries out the reaction [thioredoxin]-disulfide + L-methionine + H2O = L-methionine (S)-S-oxide + [thioredoxin]-dithiol. Its function is as follows. Has an important function as a repair enzyme for proteins that have been inactivated by oxidation. Catalyzes the reversible oxidation-reduction of methionine sulfoxide in proteins to methionine. The sequence is that of Peptide methionine sulfoxide reductase MsrA from Thermus thermophilus (strain ATCC 27634 / DSM 579 / HB8).